The sequence spans 209 residues: Thiamine-phosphate synthase (209 aa).

Residues 32-36 (QLRMK) and Asp-64 contribute to the 4-amino-2-methyl-5-(diphosphooxymethyl)pyrimidine site. Residues Asp-65 and Asp-84 each coordinate Mg(2+). Residue Thr-103 participates in 4-amino-2-methyl-5-(diphosphooxymethyl)pyrimidine binding. 129 to 131 (TTT) is a 2-[(2R,5Z)-2-carboxy-4-methylthiazol-5(2H)-ylidene]ethyl phosphate binding site. Lys-132 provides a ligand contact to 4-amino-2-methyl-5-(diphosphooxymethyl)pyrimidine. Gly-165 is a binding site for 2-[(2R,5Z)-2-carboxy-4-methylthiazol-5(2H)-ylidene]ethyl phosphate.

This sequence belongs to the thiamine-phosphate synthase family. It depends on Mg(2+) as a cofactor.

It carries out the reaction 2-[(2R,5Z)-2-carboxy-4-methylthiazol-5(2H)-ylidene]ethyl phosphate + 4-amino-2-methyl-5-(diphosphooxymethyl)pyrimidine + 2 H(+) = thiamine phosphate + CO2 + diphosphate. The catalysed reaction is 2-(2-carboxy-4-methylthiazol-5-yl)ethyl phosphate + 4-amino-2-methyl-5-(diphosphooxymethyl)pyrimidine + 2 H(+) = thiamine phosphate + CO2 + diphosphate. It catalyses the reaction 4-methyl-5-(2-phosphooxyethyl)-thiazole + 4-amino-2-methyl-5-(diphosphooxymethyl)pyrimidine + H(+) = thiamine phosphate + diphosphate. The protein operates within cofactor biosynthesis; thiamine diphosphate biosynthesis; thiamine phosphate from 4-amino-2-methyl-5-diphosphomethylpyrimidine and 4-methyl-5-(2-phosphoethyl)-thiazole: step 1/1. Its function is as follows. Condenses 4-methyl-5-(beta-hydroxyethyl)thiazole monophosphate (THZ-P) and 2-methyl-4-amino-5-hydroxymethyl pyrimidine pyrophosphate (HMP-PP) to form thiamine monophosphate (TMP). The sequence is that of Thiamine-phosphate synthase from Bacteroides thetaiotaomicron (strain ATCC 29148 / DSM 2079 / JCM 5827 / CCUG 10774 / NCTC 10582 / VPI-5482 / E50).